The following is a 254-amino-acid chain: Fasciclin-like arabinogalactan protein 7 (254 aa).

A signal peptide spans 1–22; that stretch reads MAKMQLSIFIAVVALIVCSASA. Residues 44 to 186 form the FAS1 domain; it reads NVNLTELLSV…VAVYQVNRVL (143 aa). Residues Asn-46, Asn-78, Asn-104, and Asn-130 are each glycosylated (N-linked (GlcNAc...) asparagine). A disordered region spans residues 203-233; that stretch reads APAPIVSAPSDSPSVADSEGASSPKSSHKNS. Residues 206–220 show a composition bias toward low complexity; that stretch reads PIVSAPSDSPSVADS. Residues 222 to 233 show a composition bias toward polar residues; that stretch reads GASSPKSSHKNS. The GPI-anchor amidated asparagine moiety is linked to residue Asn-232. Positions 233 to 254 are cleaved as a propeptide — removed in mature form; it reads SGQKLLLAPISMVISGLVALFL.

This sequence belongs to the fasciclin-like AGP family.

Its subcellular location is the cell membrane. May be a cell surface adhesion protein. The sequence is that of Fasciclin-like arabinogalactan protein 7 (FLA7) from Arabidopsis thaliana (Mouse-ear cress).